Reading from the N-terminus, the 122-residue chain is Large ribosomal subunit protein uL14 (122 aa).

This sequence belongs to the universal ribosomal protein uL14 family. As to quaternary structure, part of the 50S ribosomal subunit. Forms a cluster with proteins L3 and L19. In the 70S ribosome, L14 and L19 interact and together make contacts with the 16S rRNA in bridges B5 and B8.

Binds to 23S rRNA. Forms part of two intersubunit bridges in the 70S ribosome. The sequence is that of Large ribosomal subunit protein uL14 from Polaromonas naphthalenivorans (strain CJ2).